A 390-amino-acid chain; its full sequence is Phosphopentomutase (390 aa).

Mn(2+)-binding residues include Asp-11, Asp-283, His-288, Asp-324, His-325, and His-336.

Belongs to the phosphopentomutase family. Mn(2+) serves as cofactor.

The protein resides in the cytoplasm. The enzyme catalyses 2-deoxy-alpha-D-ribose 1-phosphate = 2-deoxy-D-ribose 5-phosphate. It catalyses the reaction alpha-D-ribose 1-phosphate = D-ribose 5-phosphate. The protein operates within carbohydrate degradation; 2-deoxy-D-ribose 1-phosphate degradation; D-glyceraldehyde 3-phosphate and acetaldehyde from 2-deoxy-alpha-D-ribose 1-phosphate: step 1/2. In terms of biological role, isomerase that catalyzes the conversion of deoxy-ribose 1-phosphate (dRib-1-P) and ribose 1-phosphate (Rib-1-P) to deoxy-ribose 5-phosphate (dRib-5-P) and ribose 5-phosphate (Rib-5-P), respectively. In Alkaliphilus oremlandii (strain OhILAs) (Clostridium oremlandii (strain OhILAs)), this protein is Phosphopentomutase.